The following is a 361-amino-acid chain: tRNA-specific 2-thiouridylase MnmA (361 aa).

ATP contacts are provided by residues 8–15 and Met-34; that span reads GMSGGVDS. The tract at residues 94–96 is interaction with target base in tRNA; that stretch reads NPD. Residue Cys-99 is the Nucleophile of the active site. Cysteines 99 and 195 form a disulfide. Gly-123 is an ATP binding site. An interaction with tRNA region spans residues 145-147; that stretch reads KDQ. Cys-195 functions as the Cysteine persulfide intermediate in the catalytic mechanism. The interval 307–308 is interaction with tRNA; it reads RY.

It belongs to the MnmA/TRMU family.

The protein localises to the cytoplasm. The catalysed reaction is S-sulfanyl-L-cysteinyl-[protein] + uridine(34) in tRNA + AH2 + ATP = 2-thiouridine(34) in tRNA + L-cysteinyl-[protein] + A + AMP + diphosphate + H(+). Functionally, catalyzes the 2-thiolation of uridine at the wobble position (U34) of tRNA, leading to the formation of s(2)U34. This chain is tRNA-specific 2-thiouridylase MnmA, found in Legionella pneumophila subsp. pneumophila (strain Philadelphia 1 / ATCC 33152 / DSM 7513).